The primary structure comprises 751 residues: Photosystem I P700 chlorophyll a apoprotein A1 (751 aa).

8 consecutive transmembrane segments (helical) span residues 71 to 94 (VFSA…FHGA), 157 to 180 (LYCT…FHYH), 196 to 220 (LNHH…HVSL), 292 to 310 (IAHH…GHMY), 347 to 370 (WHAQ…HHMY), 386 to 412 (LSLF…IFMV), 434 to 456 (AIIS…LYIH), and 532 to 550 (FLVH…LILL). Cys-574 and Cys-583 together coordinate [4Fe-4S] cluster. 2 helical membrane passes run 590 to 611 (HVFL…HFSW) and 665 to 687 (LSAY…MFLF). His-676 is a chlorophyll a' binding site. 2 residues coordinate chlorophyll a: Met-684 and Tyr-692. A phylloquinone-binding site is contributed by Trp-693. A helical membrane pass occupies residues 725 to 745 (AVGVTHYLLGGIATTWAFFLA).

This sequence belongs to the PsaA/PsaB family. In terms of assembly, the PsaA/B heterodimer binds the P700 chlorophyll special pair and subsequent electron acceptors. PSI consists of a core antenna complex that captures photons, and an electron transfer chain that converts photonic excitation into a charge separation. The eukaryotic PSI reaction center is composed of at least 11 subunits. Requires P700 is a chlorophyll a/chlorophyll a' dimer, A0 is one or more chlorophyll a, A1 is one or both phylloquinones and FX is a shared 4Fe-4S iron-sulfur center. as cofactor.

It localises to the plastid. Its subcellular location is the chloroplast thylakoid membrane. The enzyme catalyses reduced [plastocyanin] + hnu + oxidized [2Fe-2S]-[ferredoxin] = oxidized [plastocyanin] + reduced [2Fe-2S]-[ferredoxin]. Functionally, psaA and PsaB bind P700, the primary electron donor of photosystem I (PSI), as well as the electron acceptors A0, A1 and FX. PSI is a plastocyanin-ferredoxin oxidoreductase, converting photonic excitation into a charge separation, which transfers an electron from the donor P700 chlorophyll pair to the spectroscopically characterized acceptors A0, A1, FX, FA and FB in turn. Oxidized P700 is reduced on the lumenal side of the thylakoid membrane by plastocyanin. The protein is Photosystem I P700 chlorophyll a apoprotein A1 of Zea mays (Maize).